Reading from the N-terminus, the 465-residue chain is Ribulose bisphosphate carboxylase large chain (465 aa).

The residue at position 4 (Lys-4) is an N6,N6,N6-trimethyllysine. Substrate-binding residues include Asn-113 and Thr-163. Lys-165 serves as the catalytic Proton acceptor. Lys-167 is a binding site for substrate. Mg(2+) contacts are provided by Lys-191, Asp-193, and Glu-194. Lys-191 carries the N6-carboxylysine modification. The active-site Proton acceptor is the His-284. The substrate site is built by Arg-285, His-317, and Ser-369.

Belongs to the RuBisCO large chain family. Type I subfamily. In terms of assembly, heterohexadecamer of 8 large chains and 8 small chains; disulfide-linked. The disulfide link is formed within the large subunit homodimers. It depends on Mg(2+) as a cofactor. The disulfide bond which can form in the large chain dimeric partners within the hexadecamer appears to be associated with oxidative stress and protein turnover.

It localises to the plastid. Its subcellular location is the chloroplast. The catalysed reaction is 2 (2R)-3-phosphoglycerate + 2 H(+) = D-ribulose 1,5-bisphosphate + CO2 + H2O. It catalyses the reaction D-ribulose 1,5-bisphosphate + O2 = 2-phosphoglycolate + (2R)-3-phosphoglycerate + 2 H(+). RuBisCO catalyzes two reactions: the carboxylation of D-ribulose 1,5-bisphosphate, the primary event in carbon dioxide fixation, as well as the oxidative fragmentation of the pentose substrate in the photorespiration process. Both reactions occur simultaneously and in competition at the same active site. The chain is Ribulose bisphosphate carboxylase large chain from Casuarina equisetifolia (Beach she-oak).